Here is a 609-residue protein sequence, read N- to C-terminus: Phosphoenolpyruvate carboxykinase [GTP] (609 aa).

Substrate-binding positions include arginine 81 and 220 to 222 (YGG). Mn(2+)-binding residues include lysine 229 and histidine 249. Residue serine 271 coordinates substrate. 272 to 277 (ACGKTN) lines the GTP pocket. Residue cysteine 273 is part of the active site. Position 296 (aspartate 296) interacts with Mn(2+). A substrate-binding site is contributed by 387 to 389 (NSR). Residues arginine 389, arginine 420, and 515–518 (FGEN) contribute to the GTP site.

Belongs to the phosphoenolpyruvate carboxykinase [GTP] family. In terms of assembly, monomer. Mn(2+) is required as a cofactor.

It localises to the cytoplasm. The catalysed reaction is oxaloacetate + GTP = phosphoenolpyruvate + GDP + CO2. It participates in carbohydrate biosynthesis; gluconeogenesis. In terms of biological role, catalyzes the conversion of oxaloacetate (OAA) to phosphoenolpyruvate (PEP), the rate-limiting step in the metabolic pathway that produces glucose from lactate and other precursors derived from the citric acid cycle. In Mycobacterium leprae (strain Br4923), this protein is Phosphoenolpyruvate carboxykinase [GTP].